Consider the following 240-residue polypeptide: Cysteine-rich venom protein (240 aa).

The first 19 residues, Met1–Gly19, serve as a signal peptide directing secretion. One can recognise an SCP domain in the interval Asp39–Tyr166. 8 disulfides stabilise this stretch: Cys75–Cys153, Cys92–Cys167, Cys148–Cys164, Cys186–Cys193, Cys189–Cys198, Cys202–Cys235, Cys211–Cys229, and Cys220–Cys233. A ShKT domain is found at Cys202–Cys235.

This sequence belongs to the CRISP family. In terms of tissue distribution, expressed by the venom gland.

Its subcellular location is the secreted. In terms of biological role, may block ryanodine receptors (RYR). This chain is Cysteine-rich venom protein, found in Protobothrops mucrosquamatus (Taiwan habu).